Consider the following 177-residue polypeptide: Phycocyanin PC645 beta subunit (177 aa).

Tyr18 lines the mesobiliverdin pocket. (2R,3E)-phycocyanobilin-binding residues include Lys28, Asn35, and Asp39. Cys50, Asp54, and Cys61 together coordinate 15,16-dihydrobiliverdin. Residues Asn72, Arg77, Cys82, Arg84, and Asp85 each coordinate (2R,3E)-phycocyanobilin. Residue Gln148 participates in 15,16-dihydrobiliverdin binding. 3 residues coordinate (2R,3E)-phycocyanobilin: Pro154, Gly156, and Cys158.

The protein belongs to the phycobiliprotein family. As to quaternary structure, heterotetramer of 2 different alpha chains and 2 identical beta chains which form 2 alpha-beta heterodimers within the heterotetramer. Contains two phycocyanobilin chromophores, one mesobiliverdin chromophore and one 15,16-dihydrobiliverdin chromophore with binding mediated by both the alpha and beta subunits.

The protein localises to the plastid. The protein resides in the chloroplast thylakoid membrane. In terms of biological role, light-harvesting photosynthetic tetrapyrrole chromophore-protein from the phycobiliprotein complex. The chain is Phycocyanin PC645 beta subunit from Chroomonas sp. (strain CCMP270).